Reading from the N-terminus, the 180-residue chain is Ribulose bisphosphate carboxylase small subunit 1A, chloroplastic (180 aa).

The transit peptide at methionine 1–asparagine 54 directs the protein to the chloroplast. The residue at position 113 (serine 113) is a Phosphoserine.

Belongs to the RuBisCO small chain family. As to quaternary structure, heterohexadecamer of 8 large and 8 small subunits.

It is found in the plastid. The protein localises to the chloroplast membrane. It localises to the chloroplast stroma. In terms of biological role, ruBisCO catalyzes two reactions: the carboxylation of D-ribulose 1,5-bisphosphate, the primary event in carbon dioxide fixation, as well as the oxidative fragmentation of the pentose substrate. Both reactions occur simultaneously and in competition at the same active site. Although the small subunit is not catalytic it is essential for maximal activity. The polypeptide is Ribulose bisphosphate carboxylase small subunit 1A, chloroplastic (RBCS-1A) (Arabidopsis thaliana (Mouse-ear cress)).